The primary structure comprises 114 residues: Nascent polypeptide-associated complex protein (114 aa).

In terms of domain architecture, NAC-A/B spans Pro-5 to Lys-69.

Belongs to the NAC-alpha family. In terms of assembly, homodimer. Interacts with the ribosome. Binds ribosomal RNA.

In terms of biological role, contacts the emerging nascent chain on the ribosome. This chain is Nascent polypeptide-associated complex protein, found in Sulfurisphaera tokodaii (strain DSM 16993 / JCM 10545 / NBRC 100140 / 7) (Sulfolobus tokodaii).